Consider the following 181-residue polypeptide: ATP-dependent protease subunit HslV (181 aa).

T5 is an active-site residue. The Na(+) site is built by A161, C164, and T167.

This sequence belongs to the peptidase T1B family. HslV subfamily. A double ring-shaped homohexamer of HslV is capped on each side by a ring-shaped HslU homohexamer. The assembly of the HslU/HslV complex is dependent on binding of ATP.

The protein resides in the cytoplasm. The catalysed reaction is ATP-dependent cleavage of peptide bonds with broad specificity.. Its activity is regulated as follows. Allosterically activated by HslU binding. Functionally, protease subunit of a proteasome-like degradation complex believed to be a general protein degrading machinery. The protein is ATP-dependent protease subunit HslV of Sulfurimonas denitrificans (strain ATCC 33889 / DSM 1251) (Thiomicrospira denitrificans (strain ATCC 33889 / DSM 1251)).